An 889-amino-acid polypeptide reads, in one-letter code: Alanine--tRNA ligase (889 aa).

Residues H564, H568, C677, and H681 each coordinate Zn(2+).

This sequence belongs to the class-II aminoacyl-tRNA synthetase family. Zn(2+) is required as a cofactor.

Its subcellular location is the cytoplasm. The enzyme catalyses tRNA(Ala) + L-alanine + ATP = L-alanyl-tRNA(Ala) + AMP + diphosphate. Catalyzes the attachment of alanine to tRNA(Ala) in a two-step reaction: alanine is first activated by ATP to form Ala-AMP and then transferred to the acceptor end of tRNA(Ala). Also edits incorrectly charged Ser-tRNA(Ala) and Gly-tRNA(Ala) via its editing domain. In Rhodopseudomonas palustris (strain ATCC BAA-98 / CGA009), this protein is Alanine--tRNA ligase.